The sequence spans 44 residues: Thaumatin-like protein 5 (44 aa).

The protein belongs to the thaumatin family.

This is Thaumatin-like protein 5 from Glebionis coronaria (Crown daisy).